A 507-amino-acid polypeptide reads, in one-letter code: Alkyl hydroperoxide reductase subunit F (507 aa).

Residue 207 to 222 (DVLIVGGGPASGSAAI) participates in FAD binding. Cysteine 335 and cysteine 338 are oxidised to a cystine. 347–361 (DVAVIGGGNSGVEAA) contributes to the NAD(+) binding site. An FAD-binding site is contributed by 467–477 (TNVPGIFAAGD).

This sequence belongs to the class-II pyridine nucleotide-disulfide oxidoreductase family. In terms of assembly, homodimer. FAD is required as a cofactor.

Serves to protect the cell against DNA damage by alkyl hydroperoxides. It can use either NADH or NADPH as electron donor for direct reduction of redox dyes or of alkyl hydroperoxides when combined with the AhpC protein. This Staphylococcus aureus (strain MSSA476) protein is Alkyl hydroperoxide reductase subunit F (ahpF).